We begin with the raw amino-acid sequence, 75 residues long: ATP synthase subunit c (75 aa).

The next 2 membrane-spanning stretches (helical) occupy residues 13–33 and 54–74; these read LNVV…GILI and MFLG…LAFI.

Belongs to the ATPase C chain family. As to quaternary structure, F-type ATPases have 2 components, F(1) - the catalytic core - and F(0) - the membrane proton channel. F(1) has five subunits: alpha(3), beta(3), gamma(1), delta(1), epsilon(1). F(0) has three main subunits: a(1), b(2) and c(10-14). The alpha and beta chains form an alternating ring which encloses part of the gamma chain. F(1) is attached to F(0) by a central stalk formed by the gamma and epsilon chains, while a peripheral stalk is formed by the delta and b chains.

Its subcellular location is the cell membrane. In terms of biological role, f(1)F(0) ATP synthase produces ATP from ADP in the presence of a proton or sodium gradient. F-type ATPases consist of two structural domains, F(1) containing the extramembraneous catalytic core and F(0) containing the membrane proton channel, linked together by a central stalk and a peripheral stalk. During catalysis, ATP synthesis in the catalytic domain of F(1) is coupled via a rotary mechanism of the central stalk subunits to proton translocation. Key component of the F(0) channel; it plays a direct role in translocation across the membrane. A homomeric c-ring of between 10-14 subunits forms the central stalk rotor element with the F(1) delta and epsilon subunits. The sequence is that of ATP synthase subunit c from Bifidobacterium adolescentis (strain ATCC 15703 / DSM 20083 / NCTC 11814 / E194a).